The sequence spans 143 residues: Transcriptional regulator MraZ (143 aa).

SpoVT-AbrB domains are found at residues 5–47 (QYEH…SLEE) and 76–119 (AVEC…SKEV).

Belongs to the MraZ family. In terms of assembly, forms oligomers.

The protein resides in the cytoplasm. The protein localises to the nucleoid. The protein is Transcriptional regulator MraZ of Thermoanaerobacter sp. (strain X514).